Here is a 383-residue protein sequence, read N- to C-terminus: uncharacterized protein (383 aa).

Disordered stretches follow at residues 1–30 (MDLC…PTCT), 114–144 (ETKP…STAS), 262–289 (GEKR…ARTS), and 341–360 (AKDP…NSPQ). Residues 10–26 (DLENGENNEIQSTEETE) are compositionally biased toward acidic residues. Residues 128–141 (SSPSQTQAAPQGPS) are compositionally biased toward low complexity. Residues 262 to 271 (GEKRPSELAK) are compositionally biased toward basic and acidic residues.

This is an uncharacterized protein from Macaca fascicularis (Crab-eating macaque).